We begin with the raw amino-acid sequence, 109 residues long: Parvalbumin-7 (109 aa).

Alanine 2 is subject to N-acetylalanine. 2 consecutive EF-hand domains span residues 39-74 and 78-109; these read LSAD…FSAD and LTDK…LVHE. Residues aspartate 52, aspartate 54, serine 56, phenylalanine 58, glutamate 60, glutamate 63, aspartate 91, aspartate 93, aspartate 95, lysine 97, and glutamate 102 each coordinate Ca(2+).

The protein belongs to the parvalbumin family.

In terms of biological role, in muscle, parvalbumin is thought to be involved in relaxation after contraction. It binds two calcium ions. In Danio rerio (Zebrafish), this protein is Parvalbumin-7 (pvalb7).